A 148-amino-acid polypeptide reads, in one-letter code: uncharacterized protein (148 aa).

The 144-residue stretch at 1–144 (MNIKRITTEA…PHVLMTKEIS (144 aa)) folds into the N-acetyltransferase domain.

This is an uncharacterized protein from Bacillus subtilis (strain 168).